We begin with the raw amino-acid sequence, 431 residues long: Cyclic 2,3-diphosphoglycerate synthetase (431 aa).

It belongs to the cyclic 2,3-diphosphoglycerate synthetase family.

Its subcellular location is the cytoplasm. It catalyses the reaction (2R)-2,3-bisphosphoglycerate + ATP + H(+) = cyclic (2R)-2,3-bisphosphoglycerate + ADP + phosphate. Functionally, catalyzes the formation of cyclic 2,3-diphosphoglycerate (cDPG) by formation of an intramolecular phosphoanhydride bond at the expense of ATP. The protein is Cyclic 2,3-diphosphoglycerate synthetase of Pyrococcus furiosus (strain ATCC 43587 / DSM 3638 / JCM 8422 / Vc1).